The sequence spans 275 residues: Ribosomal RNA small subunit methyltransferase A (275 aa).

Asn-19, Leu-21, Gly-46, Glu-71, Asp-94, and Asn-117 together coordinate S-adenosyl-L-methionine.

Belongs to the class I-like SAM-binding methyltransferase superfamily. rRNA adenine N(6)-methyltransferase family. RsmA subfamily.

The protein localises to the cytoplasm. It carries out the reaction adenosine(1518)/adenosine(1519) in 16S rRNA + 4 S-adenosyl-L-methionine = N(6)-dimethyladenosine(1518)/N(6)-dimethyladenosine(1519) in 16S rRNA + 4 S-adenosyl-L-homocysteine + 4 H(+). Specifically dimethylates two adjacent adenosines (A1518 and A1519) in the loop of a conserved hairpin near the 3'-end of 16S rRNA in the 30S particle. May play a critical role in biogenesis of 30S subunits. This is Ribosomal RNA small subunit methyltransferase A from Burkholderia multivorans (strain ATCC 17616 / 249).